Reading from the N-terminus, the 186-residue chain is ATP synthase subunit delta (186 aa).

It belongs to the ATPase delta chain family. As to quaternary structure, F-type ATPases have 2 components, F(1) - the catalytic core - and F(0) - the membrane proton channel. F(1) has five subunits: alpha(3), beta(3), gamma(1), delta(1), epsilon(1). F(0) has three main subunits: a(1), b(2) and c(10-14). The alpha and beta chains form an alternating ring which encloses part of the gamma chain. F(1) is attached to F(0) by a central stalk formed by the gamma and epsilon chains, while a peripheral stalk is formed by the delta and b chains.

Its subcellular location is the cell inner membrane. F(1)F(0) ATP synthase produces ATP from ADP in the presence of a proton or sodium gradient. F-type ATPases consist of two structural domains, F(1) containing the extramembraneous catalytic core and F(0) containing the membrane proton channel, linked together by a central stalk and a peripheral stalk. During catalysis, ATP synthesis in the catalytic domain of F(1) is coupled via a rotary mechanism of the central stalk subunits to proton translocation. In terms of biological role, this protein is part of the stalk that links CF(0) to CF(1). It either transmits conformational changes from CF(0) to CF(1) or is implicated in proton conduction. The protein is ATP synthase subunit delta of Nitrobacter hamburgensis (strain DSM 10229 / NCIMB 13809 / X14).